The sequence spans 242 residues: HTH-type transcriptional regulator GadW (242 aa).

One can recognise an HTH araC/xylS-type domain in the interval 139-236 (GKVERLISFD…GVTPHQFAQH (98 aa)). 2 DNA-binding regions (H-T-H motif) span residues 156–177 (RDIA…QDEN) and 203–226 (LHTI…RQYY).

Homodimer.

Functionally, depending on the conditions (growth phase and medium), acts as a positive or negative regulator of gadA and gadBC. Repression occurs directly or via the repression of the expression of gadX. Activation occurs directly by the binding of GadW to the gadA and gadBC promoters. This chain is HTH-type transcriptional regulator GadW (gadW), found in Escherichia coli (strain K12).